Here is a 252-residue protein sequence, read N- to C-terminus: 3-deoxy-manno-octulosonate cytidylyltransferase (252 aa).

Belongs to the KdsB family.

The protein localises to the cytoplasm. The catalysed reaction is 3-deoxy-alpha-D-manno-oct-2-ulosonate + CTP = CMP-3-deoxy-beta-D-manno-octulosonate + diphosphate. It functions in the pathway nucleotide-sugar biosynthesis; CMP-3-deoxy-D-manno-octulosonate biosynthesis; CMP-3-deoxy-D-manno-octulosonate from 3-deoxy-D-manno-octulosonate and CTP: step 1/1. Its pathway is bacterial outer membrane biogenesis; lipopolysaccharide biosynthesis. Functionally, activates KDO (a required 8-carbon sugar) for incorporation into bacterial lipopolysaccharide in Gram-negative bacteria. The chain is 3-deoxy-manno-octulosonate cytidylyltransferase from Vibrio cholerae serotype O1 (strain ATCC 39315 / El Tor Inaba N16961).